Here is a 167-residue protein sequence, read N- to C-terminus: Epithelial membrane protein 2 (167 aa).

The helical transmembrane segment at 1 to 21 threads the bilayer; that stretch reads MLVLLAFIIAFHITSAALLFI. N-linked (GlcNAc...) asparagine glycans are attached at residues Asn-44, Asn-47, and Asn-52. The next 3 helical transmembrane spans lie at 67–87, 95–115, and 143–163; these read TMIL…LQLF, FVLT…AASI, and YILA…YLIL.

This sequence belongs to the PMP-22/EMP/MP20 family. Interacts with PTK2; regulates PTK2 activation and localization. Interacts with ITGB3; regulates the levels of the heterodimer ITGA5-ITGB3 integrin surface expression. Interacts with P2RX7 (via C-terminus). Interacts with ITGB1; the interaction may be direct or indirect and ITGB1 has a heterodimer form. Expressed in ciliary body epithelia, sclera, cornea, and retinal pigment epithelium (at protein level). Expressed in lung and endometrial tissue; expression is particularly abundant in secretory endometrium (at protein level). Expressed in placental villous syncytiotrophoblasts and cytotrophoblasts and on the membrane of interstitial trophoblasts (at protein level).

The protein resides in the golgi apparatus membrane. It localises to the cell membrane. The protein localises to the apical cell membrane. It is found in the membrane raft. Its subcellular location is the cytoplasm. The protein resides in the nucleus. It localises to the perinuclear region. Functions as a key regulator of cell membrane composition by regulating protein surface expression. Also, plays a role in regulation of processes including cell migration, cell proliferation, cell contraction and cell adhesion. Regulates transepithelial migration of neutrophils into the alveolar lumen, potentially via mediation of cell surface expression of adhesion markers and lipid raft formation. Negatively regulates caveolae formation by reducing CAV1 expression and CAV1 amount by increasing lysosomal degradation. Facilitates surface trafficking and formation of lipid rafts bearing GPI-anchor proteins. Regulates surface expression of MHC1 and ICAM1 proteins increasing susceptibility to T-cell mediated cytotoxicity. Regulates the plasma membrane expression of the integrin heterodimers ITGA6-ITGB1, ITGA5-ITGB3 and ITGA5-ITGB1 resulting in modulation of cell-matrix adhesion. Also regulates many processes through PTK2. Regulates blood vessel endothelial cell migration and angiogenesis by regulating VEGF protein expression through PTK2 activation. Regulates cell migration and cell contraction through PTK2 and SRC activation. Regulates focal adhesion density, F-actin conformation and cell adhesion capacity through interaction with PTK2. Positively regulates cell proliferation. Plays a role during cell death and cell blebbing. Promotes angiogenesis and vasculogenesis through induction of VEGFA via a HIF1A-dependent pathway. Also plays a role in embryo implantation by regulating surface trafficking of integrin heterodimer ITGA5-ITGB3. Plays a role in placental angiogenesis and uterine natural killer cell regulation at the maternal-fetal placental interface, however not required in the maternal tissues for a viable pregnancy. Involved in the early stages of embryogenic development and cardiogenesis, potentially via regulation of epithelial-mesenchymal transition timing. May play a role in glomerular filtration. The chain is Epithelial membrane protein 2 (EMP2) from Homo sapiens (Human).